A 198-amino-acid polypeptide reads, in one-letter code: Mediator of RNA polymerase II transcription subunit 22 (198 aa).

A disordered region spans residues 159–198 (WGSPEMTSDPSHANHEVSDHLGSQESMQRHRNGSGTSEQS).

Belongs to the Mediator complex subunit 22 family. In terms of assembly, component of the Mediator complex.

The protein resides in the nucleus. Its function is as follows. Component of the Mediator complex, a coactivator involved in the regulated transcription of nearly all RNA polymerase II-dependent genes. Mediator functions as a bridge to convey information from gene-specific regulatory proteins to the basal RNA polymerase II transcription machinery. Mediator is recruited to promoters by direct interactions with regulatory proteins and serves as a scaffold for the assembly of a functional preinitiation complex with RNA polymerase II and the general transcription factors. The chain is Mediator of RNA polymerase II transcription subunit 22 (med22) from Danio rerio (Zebrafish).